Here is a 244-residue protein sequence, read N- to C-terminus: Carboxy-S-adenosyl-L-methionine synthase (244 aa).

S-adenosyl-L-methionine contacts are provided by residues Tyr-40, 65–67, 90–91, 119–120, Asn-134, and Arg-201; these read GCS, DN, and DI.

It belongs to the class I-like SAM-binding methyltransferase superfamily. Cx-SAM synthase family. In terms of assembly, homodimer.

It catalyses the reaction prephenate + S-adenosyl-L-methionine = carboxy-S-adenosyl-L-methionine + 3-phenylpyruvate + H2O. Catalyzes the conversion of S-adenosyl-L-methionine (SAM) to carboxy-S-adenosyl-L-methionine (Cx-SAM). The polypeptide is Carboxy-S-adenosyl-L-methionine synthase (Geobacter sp. (strain M21)).